A 521-amino-acid polypeptide reads, in one-letter code: Protein TESPA1 (521 aa).

Phosphoserine is present on S311. Over residues 331–341 (QQDSDLGQFSQ) the composition is skewed to polar residues. Disordered regions lie at residues 331 to 351 (QQDSDLGQFSQEDPVPPAEGK) and 461 to 521 (QQKW…GKDS). Basic and acidic residues predominate over residues 466–475 (QSVDRPELRR). The span at 485–498 (FDLEEVQSNSEEEQ) shows a compositional bias: acidic residues. The segment covering 505–514 (SRPRHPHHHQ) has biased composition (basic residues).

As to quaternary structure, interacts with PLCG1 and GRB2; the association is increased with prolonged stimulation of the TCR and may facilitate the assembly of the LAT signalosome. Interacts with ITPR1. Also interacts with ITPR3. Interacts with HSPA9. May be phosphorylated in response to store-operated Ca(+2) entry.

It localises to the cytoplasm. Its subcellular location is the endoplasmic reticulum membrane. Functionally, required for the development and maturation of T-cells, its function being essential for the late stages of thymocyte development. Plays a role in T-cell antigen receptor (TCR)-mediated activation of the ERK and NFAT signaling pathways, possibly by serving as a scaffolding protein that promotes the assembly of the LAT signalosome in thymocytes. May play a role in the regulation of inositol 1,4,5-trisphosphate receptor-mediated Ca(2+) release and mitochondrial Ca(2+) uptake via the mitochondria-associated endoplasmic reticulum membrane (MAM) compartment. This chain is Protein TESPA1 (TESPA1), found in Homo sapiens (Human).